The sequence spans 154 residues: 6,7-dimethyl-8-ribityllumazine synthase (154 aa).

Residues Phe-22, 56-58 (AFE), and 81-83 (VLI) contribute to the 5-amino-6-(D-ribitylamino)uracil site. 86–87 (ET) provides a ligand contact to (2S)-2-hydroxy-3-oxobutyl phosphate. His-89 serves as the catalytic Proton donor. Leu-114 is a binding site for 5-amino-6-(D-ribitylamino)uracil. Position 128 (Arg-128) interacts with (2S)-2-hydroxy-3-oxobutyl phosphate.

This sequence belongs to the DMRL synthase family.

It carries out the reaction (2S)-2-hydroxy-3-oxobutyl phosphate + 5-amino-6-(D-ribitylamino)uracil = 6,7-dimethyl-8-(1-D-ribityl)lumazine + phosphate + 2 H2O + H(+). Its pathway is cofactor biosynthesis; riboflavin biosynthesis; riboflavin from 2-hydroxy-3-oxobutyl phosphate and 5-amino-6-(D-ribitylamino)uracil: step 1/2. In terms of biological role, catalyzes the formation of 6,7-dimethyl-8-ribityllumazine by condensation of 5-amino-6-(D-ribitylamino)uracil with 3,4-dihydroxy-2-butanone 4-phosphate. This is the penultimate step in the biosynthesis of riboflavin. This is 6,7-dimethyl-8-ribityllumazine synthase from Chlamydia pneumoniae (Chlamydophila pneumoniae).